The sequence spans 393 residues: Phosphoglycerate kinase (393 aa).

Substrate contacts are provided by residues aspartate 21 to asparagine 23, arginine 37, histidine 60 to arginine 63, arginine 115, and arginine 148. ATP-binding positions include lysine 199, glutamate 321, and glycine 347–threonine 350.

This sequence belongs to the phosphoglycerate kinase family. Monomer.

The protein resides in the cytoplasm. The enzyme catalyses (2R)-3-phosphoglycerate + ATP = (2R)-3-phospho-glyceroyl phosphate + ADP. The protein operates within carbohydrate degradation; glycolysis; pyruvate from D-glyceraldehyde 3-phosphate: step 2/5. This Dechloromonas aromatica (strain RCB) protein is Phosphoglycerate kinase.